The primary structure comprises 133 residues: ATP synthase epsilon chain (133 aa).

It belongs to the ATPase epsilon chain family. F-type ATPases have 2 components, CF(1) - the catalytic core - and CF(0) - the membrane proton channel. CF(1) has five subunits: alpha(3), beta(3), gamma(1), delta(1), epsilon(1). CF(0) has three main subunits: a, b and c.

It is found in the cell membrane. Produces ATP from ADP in the presence of a proton gradient across the membrane. The sequence is that of ATP synthase epsilon chain from Bacillus mycoides (strain KBAB4) (Bacillus weihenstephanensis).